Reading from the N-terminus, the 1153-residue chain is uncharacterized protein (1153 aa).

10 disordered regions span residues 164-193 (TTIK…QIDD), 224-245 (DNYD…DDDK), 294-316 (KSPQ…QSKH), 332-427 (EHKL…KNKK), 613-648 (LSML…EGEN), 683-703 (QQQQ…EEMS), 717-740 (KSDD…SKRK), 772-819 (NKKL…KTIE), 838-874 (ASSG…EDEK), and 942-1106 (NNNN…NNEV). Over residues 169 to 179 (LPPPLPQPQPQ) the composition is skewed to pro residues. Low complexity-rich tracts occupy residues 231–240 (NNNNNNNNSN), 298–312 (KLKL…QQQK), 336–391 (QQQQ…TPKK), and 399–423 (NNVN…NNNN). Residues 613 to 625 (LSMLDSTNDGSSQ) show a composition bias toward polar residues. Basic and acidic residues predominate over residues 687-699 (QEKEKQQQEKQQD). Residues 721 to 734 (NNNNNDNNNNNNNN) are compositionally biased toward low complexity. The span at 772–784 (NKKLRVDSEDQQT) shows a compositional bias: basic and acidic residues. Low complexity-rich tracts occupy residues 788-808 (TTTT…NNNN) and 839-854 (SSGG…QNDS). Positions 856–874 (TTKEKERSETIKTHNEDEK) are enriched in basic and acidic residues. Positions 942-987 (NNNNNNNNNINNINNIGNKNTTVNNSNHSNHSNNNINNNNIFKNSN) are enriched in low complexity. Polar residues-rich tracts occupy residues 988–998 (PIVDTNFSSTT) and 1005–1015 (QSKIFTGNQLP). Over residues 1019-1059 (INNENVVNNNNNNEINNTTTTTTNNNSGIHKNNNNYNSDNS) the composition is skewed to low complexity. Basic and acidic residues predominate over residues 1064 to 1081 (DGLKQEKEEQKEEQKENK). Residues 1082–1105 (NNNNNNNNNNNNNNNNNNNNNNNE) show a composition bias toward low complexity.

This is an uncharacterized protein from Dictyostelium discoideum (Social amoeba).